A 271-amino-acid chain; its full sequence is Interleukin-1 alpha (271 aa).

Residues 1-112 (MAKVPDMFED…DSEEEIIKPR (112 aa)) constitute a propeptide that is removed on maturation. N6-acetyllysine is present on lysine 82. N6-myristoyl lysine attachment occurs at residues lysine 82 and lysine 83. The tract at residues 82–86 (KKRRL) is nuclear localization signal (NLS). Serine 87 carries the phosphoserine modification. N-linked (GlcNAc...) asparagine glycans are attached at residues asparagine 102 and asparagine 141.

Belongs to the IL-1 family. In terms of assembly, monomer. Interacts with TMED10; the interaction mediates the translocation from the cytoplasm into the ERGIC (endoplasmic reticulum-Golgi intermediate compartment) and thereby secretion. Interacts with IL1R1. Interacts with S100A13; this interaction is the first step in the export of IL1A, followed by direct translocation of this complex across the plasma membrane. Acetylated within its nuclear localization sequence, which impacts subcellular localization. Post-translationally, proteolytic processed by CAPN1 in a calcium-dependent manner. Cleavage from 31 kDa precursor to 18 kDa biologically active molecules. In terms of processing, phosphorylated. Phosphorylation greatly enhances susceptibility to digestion and promotes the conversion of pre-IL1A alpha to the biologically active IL1A.

The protein localises to the nucleus. Its subcellular location is the cytoplasm. The protein resides in the secreted. Functionally, cytokine constitutively present intracellularly in nearly all resting non-hematopoietic cells that plays an important role in inflammation and bridges the innate and adaptive immune systems. After binding to its receptor IL1R1 together with its accessory protein IL1RAP, forms the high affinity interleukin-1 receptor complex. Signaling involves the recruitment of adapter molecules such as MYD88, IRAK1 or IRAK4. In turn, mediates the activation of NF-kappa-B and the three MAPK pathways p38, p42/p44 and JNK pathways. Within the cell, acts as an alarmin and cell death results in its liberation in the extracellular space after disruption of the cell membrane to induce inflammation and alert the host to injury or damage. In addition to its role as a danger signal, which occurs when the cytokine is passively released by cell necrosis, directly senses DNA damage and acts as a signal for genotoxic stress without loss of cell integrity. The chain is Interleukin-1 alpha (IL1A) from Homo sapiens (Human).